The sequence spans 173 residues: Photosystem I assembly protein Ycf3 (173 aa).

3 TPR repeats span residues 35–68 (AYLY…EDNQ), 72–105 (GETL…NPKQ), and 120–153 (GRMA…YPGG).

The protein belongs to the Ycf3 family.

It is found in the cellular thylakoid membrane. Essential for the assembly of the photosystem I (PSI) complex. May act as a chaperone-like factor to guide the assembly of the PSI subunits. In Prochlorococcus marinus (strain NATL2A), this protein is Photosystem I assembly protein Ycf3.